A 1375-amino-acid chain; its full sequence is Probable GMP synthase [glutamine-hydrolyzing] (1375 aa).

Residues Gln-7–Asp-119 enclose the Glutamine amidotransferase type-1; first part domain. Catalysis depends on Cys-84, which acts as the Nucleophile. The interval Ser-120 to Cys-500 is insert-1. 2 N-acetyltransferase domains span residues Leu-141–Glu-300 and Val-318–Lys-484. A Glutamine amidotransferase type-1; second part domain is found at Ser-501–Cys-580. Residues His-554 and Glu-556 contribute to the active site. The insert-2 stretch occupies residues Ile-597–Thr-1071. Residues Met-612 to Glu-765 enclose the N-acetyltransferase 3 domain. A disordered region spans residues Arg-1011–Gly-1036. A compositionally biased stretch (basic and acidic residues) spans Asp-1014–Ser-1027. Positions Tyr-1055 to Arg-1250 constitute a GMPS ATP-PPase domain. Position 1083–1089 (Ser-1083–Ser-1089) interacts with ATP.

In terms of assembly, homodimer.

The catalysed reaction is XMP + L-glutamine + ATP + H2O = GMP + L-glutamate + AMP + diphosphate + 2 H(+). The protein operates within purine metabolism; GMP biosynthesis; GMP from XMP (L-Gln route): step 1/1. Catalyzes the synthesis of GMP from XMP. The chain is Probable GMP synthase [glutamine-hydrolyzing] (guaA) from Helicobacter hepaticus (strain ATCC 51449 / 3B1).